Reading from the N-terminus, the 237-residue chain is Ribose-5-phosphate isomerase A (237 aa).

Residues 29–32 (SGST), 86–89 (DGAD), and 99–102 (KGGG) each bind substrate. Glu-108 (proton acceptor) is an active-site residue. Lys-126 serves as a coordination point for substrate.

It belongs to the ribose 5-phosphate isomerase family. Homodimer.

The catalysed reaction is aldehydo-D-ribose 5-phosphate = D-ribulose 5-phosphate. It functions in the pathway carbohydrate degradation; pentose phosphate pathway; D-ribose 5-phosphate from D-ribulose 5-phosphate (non-oxidative stage): step 1/1. In terms of biological role, catalyzes the reversible conversion of ribose-5-phosphate to ribulose 5-phosphate. The polypeptide is Ribose-5-phosphate isomerase A (Prochlorococcus marinus (strain MIT 9312)).